The primary structure comprises 419 residues: Dual specificity protein phosphatase 7 (419 aa).

Residues 1 to 47 (MKNQLRGPPARAHMSTSGAAAAGGTRAGSEPGAGSGSGAGTGAGAAT) form a disordered region. Positions 10–29 (ARAHMSTSGAAAAGGTRAGS) are enriched in low complexity. Residues 31–47 (PGAGSGSGAGTGAGAAT) show a composition bias toward gly residues. A Rhodanese domain is found at 68-187 (GGASLLLLDC…FQTEYSEHCE (120 aa)). The tract at residues 216-240 (CSDGESDRELPSSATESDGSPVPSS) is disordered. Positions 227-240 (SSATESDGSPVPSS) are enriched in polar residues. The region spanning 244-387 (FPVQILPYLY…LLDFERTLGL (144 aa)) is the Tyrosine-protein phosphatase domain. The active-site Phosphocysteine intermediate is the C331. A substrate-binding site is contributed by 331-337 (CLAGISR).

Belongs to the protein-tyrosine phosphatase family. Non-receptor class dual specificity subfamily. As to quaternary structure, interacts with MAPK1/ERK2; the interaction enhances DUSP7 phosphatase activity. Strongly expressed in liver. Expressed at significantly higher levels in malignant hematopoietic cells than in corresponding non-malignant cells.

Its subcellular location is the cytoplasm. The enzyme catalyses O-phospho-L-tyrosyl-[protein] + H2O = L-tyrosyl-[protein] + phosphate. It carries out the reaction O-phospho-L-seryl-[protein] + H2O = L-seryl-[protein] + phosphate. The catalysed reaction is O-phospho-L-threonyl-[protein] + H2O = L-threonyl-[protein] + phosphate. Strongly inhibited by sodium orthovanadate. Functionally, dual specificity protein phosphatase. Shows high activity towards MAPK1/ERK2. Also has lower activity towards MAPK14 and MAPK8. In arrested oocytes, plays a role in meiotic resumption. Promotes nuclear envelope breakdown and activation of the CDK1/Cyclin-B complex in oocytes, probably by dephosphorylating and inactivating the conventional protein kinase C (cPKC) isozyme PRKCB. May also inactivate PRKCA and/or PRKCG. Also important in oocytes for normal chromosome alignment on the metaphase plate and progression to anaphase, where it might regulate activity of the spindle-assembly checkpoint (SAC) complex. The sequence is that of Dual specificity protein phosphatase 7 from Homo sapiens (Human).